The chain runs to 95 residues: Acylphosphatase (95 aa).

One can recognise an Acylphosphatase-like domain in the interval 10-95 (CIHATVSGKV…VEDYSDFRVR (86 aa)). Active-site residues include Arg25 and Asn43.

Belongs to the acylphosphatase family.

It carries out the reaction an acyl phosphate + H2O = a carboxylate + phosphate + H(+). In Coxiella burnetii (strain Dugway 5J108-111), this protein is Acylphosphatase (acyP).